Reading from the N-terminus, the 168-residue chain is Phosphopantetheine adenylyltransferase (168 aa).

A substrate-binding site is contributed by Thr9. Residues 9–10 and His17 contribute to the ATP site; that span reads TF. 3 residues coordinate substrate: Lys41, Leu73, and Arg87. ATP contacts are provided by residues 88 to 90, Glu98, and 123 to 129; these read GLR and YQFISGT.

It belongs to the bacterial CoaD family. In terms of assembly, homohexamer. Mg(2+) serves as cofactor.

Its subcellular location is the cytoplasm. It carries out the reaction (R)-4'-phosphopantetheine + ATP + H(+) = 3'-dephospho-CoA + diphosphate. It participates in cofactor biosynthesis; coenzyme A biosynthesis; CoA from (R)-pantothenate: step 4/5. Its function is as follows. Reversibly transfers an adenylyl group from ATP to 4'-phosphopantetheine, yielding dephospho-CoA (dPCoA) and pyrophosphate. This is Phosphopantetheine adenylyltransferase from Paraburkholderia phymatum (strain DSM 17167 / CIP 108236 / LMG 21445 / STM815) (Burkholderia phymatum).